Here is a 162-residue protein sequence, read N- to C-terminus: Sorting nexin-3 (162 aa).

Ala2 bears the N-acetylalanine mark. The 125-residue stretch at 27-151 (NFLEIDVSNP…HMFLQDEIID (125 aa)) folds into the PX domain. Arg43 carries the post-translational modification Omega-N-methylarginine. A 1,2-diacyl-sn-glycero-3-phospho-(1D-myo-inositol-3-phosphate) contacts are provided by Arg70, Ser72, Lys95, and Arg118. Ser72 carries the phosphoserine modification. Lys95 is covalently cross-linked (Glycyl lysine isopeptide (Lys-Gly) (interchain with G-Cter in SUMO2)). Residues 147–162 (DEIIDKSYTPSKIRHA) form a binds predominantly to PtdIns(P5) and weaker to PtdIns(P3) abd PtdIns(P4); involved in neurite outgrowth regulation region.

It belongs to the sorting nexin family. In terms of assembly, interacts with VPS26A, VPS29 and VPS35; the interaction with VPS35 is direct. The association with the retromer CSC subcomplex subunits is proposed to represent a functional distinct retromer variant described as SNX3-retromer complex. Interacts with USP10 and SCNN1A. Interacts with TRFC. Interacts with SNX8; 2 molecules of SNX8 seems to associate with one molecule of SNX3. Interacts with PTPRU. Interacts with MON2 and DOP1B. Ubiquitinated, leading to its proteasomal degradation. Deubiquitinated by USP10.

The protein resides in the early endosome. The protein localises to the cytoplasmic vesicle. Its subcellular location is the phagosome. Functionally, phosphoinositide-binding protein required for multivesicular body formation. Specifically binds phosphatidylinositol 3-phosphate (PtdIns(P3)). Can also bind phosphatidylinositol 4-phosphate (PtdIns(P4)), phosphatidylinositol 5-phosphate (PtdIns(P5)) and phosphatidylinositol 3,5-biphosphate (PtdIns(3,5)P2). Plays a role in protein transport between cellular compartments. Together with RAB7A facilitates endosome membrane association of the retromer cargo-selective subcomplex (CSC/VPS). May in part act as component of the SNX3-retromer complex which mediates the retrograde endosome-to-TGN transport of WLS distinct from the SNX-BAR retromer pathway. Promotes stability and cell surface expression of epithelial sodium channel (ENAC) subunits SCNN1A and SCNN1G. Not involved in EGFR degradation. Involved in the regulation of phagocytosis in dendritic cells possibly by regulating EEA1 recruitment to the nascent phagosomes. Involved in iron homeostasis through regulation of endocytic recycling of the transferrin receptor TFRC presumably by delivering the transferrin:transferrin receptor complex to recycling endosomes; the function may involve the CSC retromer subcomplex. In the case of Salmonella enterica infection plays arole in maturation of the Salmonella-containing vacuole (SCV) and promotes recruitment of LAMP1 to SCVs. This Homo sapiens (Human) protein is Sorting nexin-3.